Reading from the N-terminus, the 73-residue chain is Exodeoxyribonuclease 7 small subunit (73 aa).

This sequence belongs to the XseB family. As to quaternary structure, heterooligomer composed of large and small subunits.

The protein localises to the cytoplasm. It catalyses the reaction Exonucleolytic cleavage in either 5'- to 3'- or 3'- to 5'-direction to yield nucleoside 5'-phosphates.. Bidirectionally degrades single-stranded DNA into large acid-insoluble oligonucleotides, which are then degraded further into small acid-soluble oligonucleotides. The polypeptide is Exodeoxyribonuclease 7 small subunit (Streptococcus mutans serotype c (strain ATCC 700610 / UA159)).